The following is a 254-amino-acid chain: Fasciclin-like arabinogalactan protein 7 (254 aa).

The first 22 residues, 1–22, serve as a signal peptide directing secretion; that stretch reads MAKMQLSIFIAVVALIVCSASA. Residues 44-186 form the FAS1 domain; the sequence is NVNLTELLSV…VAVYQVNRVL (143 aa). N-linked (GlcNAc...) asparagine glycans are attached at residues Asn-46, Asn-78, Asn-104, and Asn-130. Residues 203 to 233 form a disordered region; it reads APAPIVSAPSDSPSVADSEGASSPKSSHKNS. Positions 206-220 are enriched in low complexity; the sequence is PIVSAPSDSPSVADS. Residues 222-233 are compositionally biased toward polar residues; sequence GASSPKSSHKNS. Asn-232 carries the GPI-anchor amidated asparagine lipid modification. Positions 233–254 are cleaved as a propeptide — removed in mature form; that stretch reads SGQKLLLAPISMVISGLVALFL.

This sequence belongs to the fasciclin-like AGP family.

The protein localises to the cell membrane. Its function is as follows. May be a cell surface adhesion protein. This Arabidopsis thaliana (Mouse-ear cress) protein is Fasciclin-like arabinogalactan protein 7 (FLA7).